Reading from the N-terminus, the 278-residue chain is MVTARETRRNGSRPSGLKKWRQKLDGILLPLAGILGFLIIWQIFSSSGATRLPGPLSLFTEERTRELLLYPFLDRGGLDKGLFWQTIASLTRVAQGFSIAAIIGISVGILVGLNRQLNAMLDPLFQFLRMIAPLAWVPIALVAFQQNQPAAIFVIFITAVWPILINTAEGVRQIPQDYNNVARVLRMSKSKYLMKVVLPAALPYIFTGLRIAIGLSWLAIIAAEIVMSGIVGIGFFIWDAYQQNYVSDIILAVIYIGAVGLLLDRFVAWLQRWILRNM.

A run of 7 helical transmembrane segments spans residues 24–44 (LDGI…WQIF), 93–113 (VAQG…LVGL), 124–144 (LFQF…LVAF), 151–171 (AIFV…AEGV), 196–216 (VVLP…IGLS), 217–237 (WLAI…GFFI), and 249–269 (IILA…FVAW). Positions 86–267 (TIASLTRVAQ…AVGLLLDRFV (182 aa)) constitute an ABC transmembrane type-1 domain.

It belongs to the binding-protein-dependent transport system permease family. In terms of assembly, the complex is composed of two ATP-binding proteins (CmpC and CmpD), a transmembrane protein (CmpB) and a solute-binding protein (CmpA).

The protein resides in the cell inner membrane. Functionally, part of the ABC transporter complex CmpABCD involved in bicarbonate transport. Probably responsible for the translocation of the substrate across the membrane. This is Bicarbonate transport system permease protein CmpB (cmpB) from Synechococcus sp. (strain ATCC 27144 / PCC 6301 / SAUG 1402/1) (Anacystis nidulans).